The following is a 251-amino-acid chain: MFKFLITLEYDGSDFHGWIEQPKTSTIQGELNKAINRVTKNAVFKTIGASKTDTGVHAIDQKVLLDLGFNPKLDLFKKAINKALPETIKVRSIEEVKQDFNIRDVLYKEYSYTINDKEYNILSNRFELNWDFEEIDIDKLQNIFNLFIGEHEFKLFSGLNHKELDSNKITTIREIESIDVKRALDKVVITFKAKGFIRYQIRMIVQSALNCYLNKKISADEIKEKLQGKGNKPPFNAPAKGLKLNKIVFKS.

Catalysis depends on Asp-53, which acts as the Nucleophile. Tyr-110 contributes to the substrate binding site.

Belongs to the tRNA pseudouridine synthase TruA family. As to quaternary structure, homodimer.

It carries out the reaction uridine(38/39/40) in tRNA = pseudouridine(38/39/40) in tRNA. Functionally, formation of pseudouridine at positions 38, 39 and 40 in the anticodon stem and loop of transfer RNAs. This chain is tRNA pseudouridine synthase A, found in Mesoplasma florum (strain ATCC 33453 / NBRC 100688 / NCTC 11704 / L1) (Acholeplasma florum).